A 1053-amino-acid polypeptide reads, in one-letter code: Serine/threonine-protein phosphatase 6 regulatory ankyrin repeat subunit A (1053 aa).

ANK repeat units follow at residues 40-69 (EKRTPLHAAAYLGDAEIIELLILSGARVNA), 73-102 (KWLTPLHRAVASCSEEAVQVLLKHSADVNA), 106-135 (NWQTPLHIAAANKAVKCAEALVPLLSNVNV), 139-168 (AGRTALHHAAFSGHGEMVKLLLSRGANINA), 172-201 (KDRRAIHWAAYMGHIEVVKLLVSHGAEVTC), 205-234 (KSYTPLHAAASSGMISVVKYLLDLGVDMNE), 238-267 (YGNTPLHVACYNGQDVVVNELIDCGAIVNQ), 271-301 (KGFTPLHFAAASTHGALCLELLVGNGADVNM), 305-334 (DGKTPLHMTALHGRFSRSQTIIQSGAVIDC), 338-367 (NGNTPLHIAARYGHELLINTLITSGADTAK), 371-400 (HGMFPLHLAALSGFSDCCRKLLSSGFDIDT), 404-433 (FGRTCLHAAAAGGNLECLNLLLNTGADFNK), 437-466 (FGRSPLHYAAANCNYQCLFALVGSGASVND), 470-500 (RGCTPLHYAATSDTDGKCLEYLLRNDANPGI), 504-534 (QGYNAVHYSAAYGHRLCLQLIASETPLDVLM), 549-578 (ATISPLHLAAYHGHHQALEVLVQSLLDLDV), 582-611 (SGRTPLDLAAFKGHVECVDVLINQGASILV), 616-645 (LKRTPIHAAATNGHSECLRLLIGNAEPQNA), 652-681 (NGQTPLMLSVLNGHTDCVYSLLNKGANVDA), 685-714 (WGRTALHRGAVTGHEECVDALLQHGAKCLL), 718-747 (RGRTPIHLSAACGHIGVLGALLQSAASMDA), 755-784 (HGYTALHWACYNGHETCVELLLEQEVFQKT), 787-817 (NAFSPLHCAVINDNEGAAEMLIDTLGASIVN), 822-851 (KGRTPLHAAAFTDHVECLQLLLSHNAQVNS), 855-885 (TGKTPLMMAAENGQTNTVEMLVSSASAELTL), 889-918 (SKNTALHLACSKGHETSALLILEKITDRNL), and 925-954 (ALQTPLHVAARNGLTMVVQELLGKGASVLA). 2 positions are modified to phosphoserine: Ser1007 and Ser1011.

In terms of assembly, protein phosphatase 6 (PP6) holoenzyme is proposed to be a heterotrimeric complex formed by the catalytic subunit, a SAPS domain-containing subunit (PP6R) and an ankyrin repeat-domain containing regulatory subunit (ARS). Interacts with PPP6C, PPP6R1 and PPP6R3. Interacts with PPP1C and HNRPK. Ubiquitinated by the ECS(RAB40C) complex leading to its degradation and decreased PP6 activity.

It localises to the nucleus. The protein resides in the nucleoplasm. Its subcellular location is the cytoplasm. The protein localises to the cytosol. It is found in the cell projection. It localises to the lamellipodium. Regulatory subunit of protein phosphatase 6 (PP6) that may be involved in the recognition of phosphoprotein substrates. Involved in the PP6-mediated dephosphorylation of NFKBIE opposing its degradation in response to TNF-alpha. Selectively inhibits the phosphatase activity of PPP1C. Targets PPP1C to modulate HNRPK phosphorylation. Involved in the PP6-mediated dephosphorylation of MOB1 and induced focal adhesion assembly during cell migration. This is Serine/threonine-protein phosphatase 6 regulatory ankyrin repeat subunit A from Homo sapiens (Human).